Reading from the N-terminus, the 84-residue chain is Dolichol phosphate-mannose biosynthesis regulatory protein (84 aa).

2 consecutive transmembrane segments (helical) span residues 11–31 (LGLV…VILL) and 49–69 (YAIA…GIFI).

It belongs to the DPM2 family. In terms of assembly, component of the dolichol-phosphate mannose (DPM) synthase complex composed of DPM1, DPM2 and DPM3; in the complex interacts directly with DPM3. Component of the glycosylphosphatidylinositol-N-acetylglucosaminyltransferase (GPI-GnT) complex composed at least by PIGA, PIGC, PIGH, PIGP, PIGQ, PIGY and DPM2. Interacts with PIGA, PIGC and PIGQ.

The protein localises to the endoplasmic reticulum membrane. The protein operates within protein modification; protein glycosylation. In terms of biological role, regulates the biosynthesis of dolichol phosphate-mannose. Regulatory subunit of the dolichol-phosphate mannose (DPM) synthase complex; essential for the ER localization and stable expression of DPM1. Part of the glycosylphosphatidylinositol-N-acetylglucosaminyltransferase (GPI-GnT) complex that catalyzes the transfer of N-acetylglucosamine from UDP-N-acetylglucosamine to phosphatidylinositol and participates in the first step of GPI biosynthesis. May act by regulating the GPI-GNT complex. This is Dolichol phosphate-mannose biosynthesis regulatory protein from Bos taurus (Bovine).